Reading from the N-terminus, the 567-residue chain is Proline--tRNA ligase (567 aa).

The protein belongs to the class-II aminoacyl-tRNA synthetase family. ProS type 1 subfamily. In terms of assembly, homodimer.

It is found in the cytoplasm. The catalysed reaction is tRNA(Pro) + L-proline + ATP = L-prolyl-tRNA(Pro) + AMP + diphosphate. Its function is as follows. Catalyzes the attachment of proline to tRNA(Pro) in a two-step reaction: proline is first activated by ATP to form Pro-AMP and then transferred to the acceptor end of tRNA(Pro). As ProRS can inadvertently accommodate and process non-cognate amino acids such as alanine and cysteine, to avoid such errors it has two additional distinct editing activities against alanine. One activity is designated as 'pretransfer' editing and involves the tRNA(Pro)-independent hydrolysis of activated Ala-AMP. The other activity is designated 'posttransfer' editing and involves deacylation of mischarged Ala-tRNA(Pro). The misacylated Cys-tRNA(Pro) is not edited by ProRS. This Geobacillus sp. (strain WCH70) protein is Proline--tRNA ligase.